The following is a 283-amino-acid chain: Tryptophan 2,3-dioxygenase (283 aa).

Substrate is bound by residues 52–56, Y114, and R118; that span reads FIIQH. H241 lines the heme pocket. T255 is a substrate binding site.

The protein belongs to the tryptophan 2,3-dioxygenase family. As to quaternary structure, homotetramer. Requires heme as cofactor.

It carries out the reaction L-tryptophan + O2 = N-formyl-L-kynurenine. The protein operates within amino-acid degradation; L-tryptophan degradation via kynurenine pathway; L-kynurenine from L-tryptophan: step 1/2. Its function is as follows. Heme-dependent dioxygenase that catalyzes the oxidative cleavage of the L-tryptophan (L-Trp) pyrrole ring and converts L-tryptophan to N-formyl-L-kynurenine. Catalyzes the oxidative cleavage of the indole moiety. This chain is Tryptophan 2,3-dioxygenase, found in Pseudomonas fluorescens (strain ATCC BAA-477 / NRRL B-23932 / Pf-5).